An 828-amino-acid polypeptide reads, in one-letter code: Phenylalanine--tRNA ligase beta subunit (828 aa).

One can recognise a tRNA-binding domain in the interval Gly-44–Ala-155. The B5 domain occupies Trp-411–Ser-486. Residues Asp-464, Asp-470, Glu-473, and Glu-474 each coordinate Mg(2+). Positions Ser-734 to Arg-827 constitute an FDX-ACB domain.

It belongs to the phenylalanyl-tRNA synthetase beta subunit family. Type 1 subfamily. In terms of assembly, tetramer of two alpha and two beta subunits. Requires Mg(2+) as cofactor.

It is found in the cytoplasm. The catalysed reaction is tRNA(Phe) + L-phenylalanine + ATP = L-phenylalanyl-tRNA(Phe) + AMP + diphosphate + H(+). The chain is Phenylalanine--tRNA ligase beta subunit from Mycolicibacterium paratuberculosis (strain ATCC BAA-968 / K-10) (Mycobacterium paratuberculosis).